Reading from the N-terminus, the 277-residue chain is Large ribosomal subunit protein uL2 (277 aa).

The tract at residues 212 to 277 (RWRGKRPHVR…KFIVRGRKSK (66 aa)) is disordered. Positions 254-277 (TAGKKTRDKKKASTKFIVRGRKSK) are enriched in basic residues.

The protein belongs to the universal ribosomal protein uL2 family. Part of the 50S ribosomal subunit. Forms a bridge to the 30S subunit in the 70S ribosome.

In terms of biological role, one of the primary rRNA binding proteins. Required for association of the 30S and 50S subunits to form the 70S ribosome, for tRNA binding and peptide bond formation. It has been suggested to have peptidyltransferase activity; this is somewhat controversial. Makes several contacts with the 16S rRNA in the 70S ribosome. This chain is Large ribosomal subunit protein uL2, found in Leuconostoc citreum (strain KM20).